Reading from the N-terminus, the 272-residue chain is Phosphoglycolate phosphatase (272 aa).

The active-site Nucleophile is Asp-19. Residues Asp-19, Asp-21, and Asp-182 each contribute to the Mg(2+) site.

It belongs to the HAD-like hydrolase superfamily. CbbY/CbbZ/Gph/YieH family. The cofactor is Mg(2+).

It carries out the reaction 2-phosphoglycolate + H2O = glycolate + phosphate. The protein operates within organic acid metabolism; glycolate biosynthesis; glycolate from 2-phosphoglycolate: step 1/1. Its function is as follows. Specifically catalyzes the dephosphorylation of 2-phosphoglycolate. Is involved in the dissimilation of the intracellular 2-phosphoglycolate formed during the DNA repair of 3'-phosphoglycolate ends, a major class of DNA lesions induced by oxidative stress. The chain is Phosphoglycolate phosphatase from Pseudomonas putida (strain ATCC 47054 / DSM 6125 / CFBP 8728 / NCIMB 11950 / KT2440).